The chain runs to 319 residues: Methionyl-tRNA formyltransferase (319 aa).

Ser112–Pro115 contributes to the (6S)-5,6,7,8-tetrahydrofolate binding site.

The protein belongs to the Fmt family.

It catalyses the reaction L-methionyl-tRNA(fMet) + (6R)-10-formyltetrahydrofolate = N-formyl-L-methionyl-tRNA(fMet) + (6S)-5,6,7,8-tetrahydrofolate + H(+). Attaches a formyl group to the free amino group of methionyl-tRNA(fMet). The formyl group appears to play a dual role in the initiator identity of N-formylmethionyl-tRNA by promoting its recognition by IF2 and preventing the misappropriation of this tRNA by the elongation apparatus. This is Methionyl-tRNA formyltransferase from Shewanella denitrificans (strain OS217 / ATCC BAA-1090 / DSM 15013).